We begin with the raw amino-acid sequence, 328 residues long: YDG domain-containing protein At5g47150 (328 aa).

The YDG domain maps to 176–320; sequence GSVPGINIGD…KSVYKFKLCR (145 aa).

The protein localises to the nucleus. This is YDG domain-containing protein At5g47150 from Arabidopsis thaliana (Mouse-ear cress).